Consider the following 210-residue polypeptide: MPDTVCRPPRLILASSSRYRRALLERLGIPFDVVSPDLDETPHDGETPAATALRLAAAKARAVAATIDAPDGVLVIGSDQVATFDGLQIGKPGTHERALAQLVSMQGREVEFHSALCLYDSRTGEAQVEDIVTHVRFRSLPEAELDAYLRAETPYDVAGSAKSEGLGIALLDAIDSNDPTALVGLPLIALTRMLRAADYPLFATTRGDRA.

The active-site Proton acceptor is Asp79.

This sequence belongs to the Maf family. YceF subfamily. A divalent metal cation serves as cofactor.

It is found in the cytoplasm. It catalyses the reaction N(7)-methyl-GTP + H2O = N(7)-methyl-GMP + diphosphate + H(+). Functionally, nucleoside triphosphate pyrophosphatase that hydrolyzes 7-methyl-GTP (m(7)GTP). May have a dual role in cell division arrest and in preventing the incorporation of modified nucleotides into cellular nucleic acids. This Burkholderia lata (strain ATCC 17760 / DSM 23089 / LMG 22485 / NCIMB 9086 / R18194 / 383) protein is 7-methyl-GTP pyrophosphatase.